A 96-amino-acid chain; its full sequence is Co-chaperonin GroES (96 aa).

It belongs to the GroES chaperonin family. As to quaternary structure, heptamer of 7 subunits arranged in a ring. Interacts with the chaperonin GroEL.

The protein resides in the cytoplasm. In terms of biological role, together with the chaperonin GroEL, plays an essential role in assisting protein folding. The GroEL-GroES system forms a nano-cage that allows encapsulation of the non-native substrate proteins and provides a physical environment optimized to promote and accelerate protein folding. GroES binds to the apical surface of the GroEL ring, thereby capping the opening of the GroEL channel. The sequence is that of Co-chaperonin GroES from Solidesulfovibrio magneticus (strain ATCC 700980 / DSM 13731 / RS-1) (Desulfovibrio magneticus).